Consider the following 289-residue polypeptide: Heme oxygenase 1 (289 aa).

Over 1–266 (MERPQLDSMS…SQISTSSSQT (266 aa)) the chain is Cytoplasmic. Residues K18, H25, Y134, and R183 each contribute to the heme b site. The segment at 225–261 (HKDQSPSQTEFLRQRPASLVQDTTSAETPRGKSQIST) is disordered. Residues S229 and S242 each carry the phosphoserine modification. Polar residues predominate over residues 244 to 261 (VQDTTSAETPRGKSQIST). Residues 267 to 289 (PLLRWVLTLSFLLATVAVGIYAM) form a helical; Anchor for type IV membrane protein membrane-spanning segment.

The protein belongs to the heme oxygenase family. Homodimer and higher order homooligomer. Oligomerization is crucial for its stability and function in the endoplasmic reticulum. Interacts with FLVCR2; this interaction is potentiated in the presence of heme. In terms of processing, a soluble form arises by proteolytic removal of the membrane anchor.

The protein localises to the endoplasmic reticulum membrane. The enzyme catalyses heme b + 3 reduced [NADPH--hemoprotein reductase] + 3 O2 = biliverdin IXalpha + CO + Fe(2+) + 3 oxidized [NADPH--hemoprotein reductase] + 3 H2O + H(+). With respect to regulation, inhibited by metalloporphyrins such as Sn- and Zn-protoporphyrins. In terms of biological role, catalyzes the oxidative cleavage of heme at the alpha-methene bridge carbon, released as carbon monoxide (CO), to generate biliverdin IXalpha, while releasing the central heme iron chelate as ferrous iron. Affords protection against programmed cell death and this cytoprotective effect relies on its ability to catabolize free heme and prevent it from sensitizing cells to undergo apoptosis. Functionally, catalyzes the oxidative cleavage of heme at the alpha-methene bridge carbon, released as carbon monoxide (CO), to generate biliverdin IXalpha, while releasing the central heme iron chelate as ferrous iron. In Rattus norvegicus (Rat), this protein is Heme oxygenase 1 (Hmox1).